The following is an 85-amino-acid chain: Large ribosomal subunit protein bL27 (85 aa).

The interval 1–20 (MAHKKAGGSTRNGRDSESKR) is disordered.

Belongs to the bacterial ribosomal protein bL27 family.

The sequence is that of Large ribosomal subunit protein bL27 from Yersinia pseudotuberculosis serotype O:1b (strain IP 31758).